The sequence spans 432 residues: 3-phosphoshikimate 1-carboxyvinyltransferase (432 aa).

3-phosphoshikimate is bound by residues lysine 23, serine 24, and arginine 28. Lysine 23 is a binding site for phosphoenolpyruvate. Phosphoenolpyruvate contacts are provided by glycine 95 and arginine 123. 3-phosphoshikimate contacts are provided by serine 167, glutamine 169, aspartate 317, and lysine 344. Glutamine 169 is a binding site for phosphoenolpyruvate. Residue aspartate 317 is the Proton acceptor of the active site. Phosphoenolpyruvate-binding residues include arginine 348 and arginine 390.

The protein belongs to the EPSP synthase family. Monomer.

It is found in the cytoplasm. It carries out the reaction 3-phosphoshikimate + phosphoenolpyruvate = 5-O-(1-carboxyvinyl)-3-phosphoshikimate + phosphate. It participates in metabolic intermediate biosynthesis; chorismate biosynthesis; chorismate from D-erythrose 4-phosphate and phosphoenolpyruvate: step 6/7. Its function is as follows. Catalyzes the transfer of the enolpyruvyl moiety of phosphoenolpyruvate (PEP) to the 5-hydroxyl of shikimate-3-phosphate (S3P) to produce enolpyruvyl shikimate-3-phosphate and inorganic phosphate. In Staphylococcus aureus (strain COL), this protein is 3-phosphoshikimate 1-carboxyvinyltransferase.